A 147-amino-acid polypeptide reads, in one-letter code: MGLEKSFLLFSLLVLVLGWVQPSLGVESRETQTQKFQRQHMDEEGHFPSSPTYCNQMMKSRGMTSGSCKPMNTFVHEPLETVQAICSQGQVTCKNGKRNCHKSSSTLRITDCRLKGSSKYPKCDYTTTDSQKHIIIACDVVHLDATV.

Residues 1 to 25 form the signal peptide; that stretch reads MGLEKSFLLFSLLVLVLGWVQPSLG. Positions 35 and 38 each coordinate substrate. Residue histidine 40 is the Proton acceptor of the active site. 4 cysteine pairs are disulfide-bonded: cysteine 54/cysteine 112, cysteine 68/cysteine 123, cysteine 86/cysteine 138, and cysteine 93/cysteine 100. Substrate is bound by residues 69 to 73, lysine 94, and arginine 113; that span reads KPMNT. Histidine 142 acts as the Proton donor in catalysis.

The protein belongs to the pancreatic ribonuclease family. As to quaternary structure, monomer.

It is found in the secreted. It carries out the reaction an [RNA] containing cytidine + H2O = an [RNA]-3'-cytidine-3'-phosphate + a 5'-hydroxy-ribonucleotide-3'-[RNA].. The catalysed reaction is an [RNA] containing uridine + H2O = an [RNA]-3'-uridine-3'-phosphate + a 5'-hydroxy-ribonucleotide-3'-[RNA].. Functionally, endonuclease that catalyzes the cleavage of RNA on the 3' side of pyrimidine nucleotides. Acts on single-stranded and double-stranded RNA. The sequence is that of Ribonuclease pancreatic gamma-type from Rattus rattus (Black rat).